A 269-amino-acid chain; its full sequence is Thiazole synthase (269 aa).

Lys109 acts as the Schiff-base intermediate with DXP in catalysis. Residues Gly170, 196-197 (AG), and 218-219 (NT) each bind 1-deoxy-D-xylulose 5-phosphate.

This sequence belongs to the ThiG family. In terms of assembly, homotetramer. Forms heterodimers with either ThiH or ThiS.

Its subcellular location is the plastid. The protein localises to the chloroplast. It catalyses the reaction [ThiS sulfur-carrier protein]-C-terminal-Gly-aminoethanethioate + 2-iminoacetate + 1-deoxy-D-xylulose 5-phosphate = [ThiS sulfur-carrier protein]-C-terminal Gly-Gly + 2-[(2R,5Z)-2-carboxy-4-methylthiazol-5(2H)-ylidene]ethyl phosphate + 2 H2O + H(+). The protein operates within cofactor biosynthesis; thiamine diphosphate biosynthesis. Functionally, catalyzes the rearrangement of 1-deoxy-D-xylulose 5-phosphate (DXP) to produce the thiazole phosphate moiety of thiamine. Sulfur is provided by the thiocarboxylate moiety of the carrier protein ThiS. In vitro, sulfur can be provided by H(2)S. The polypeptide is Thiazole synthase (Thalassiosira pseudonana (Marine diatom)).